The primary structure comprises 201 residues: ATP-dependent dethiobiotin synthetase BioD (201 aa).

Asp11–His16 serves as a coordination point for ATP. Position 15 (Thr15) interacts with Mg(2+). Lys31 is a catalytic residue. Residues Asp40 and Glu93–Gly96 contribute to the ATP site. The Mg(2+) site is built by Asp40 and Glu93.

The protein belongs to the dethiobiotin synthetase family. Homodimer. Mg(2+) is required as a cofactor.

It localises to the cytoplasm. It carries out the reaction (7R,8S)-7,8-diammoniononanoate + CO2 + ATP = (4R,5S)-dethiobiotin + ADP + phosphate + 3 H(+). It participates in cofactor biosynthesis; biotin biosynthesis; biotin from 7,8-diaminononanoate: step 1/2. In terms of biological role, catalyzes a mechanistically unusual reaction, the ATP-dependent insertion of CO2 between the N7 and N8 nitrogen atoms of 7,8-diaminopelargonic acid (DAPA, also called 7,8-diammoniononanoate) to form a ureido ring. This chain is ATP-dependent dethiobiotin synthetase BioD, found in Campylobacter jejuni subsp. jejuni serotype O:6 (strain 81116 / NCTC 11828).